A 670-amino-acid polypeptide reads, in one-letter code: uncharacterized protein (670 aa).

10 helical membrane-spanning segments follow: residues 23 to 42 (YALRNTIAMCLALTVAYYLN), 47 to 69 (YWAMTSAAVVSFPTVGGVISKSL), 76 to 98 (LLGAIAALLLAGHTLNEPWFFLL), 118 to 140 (VAYAFQLAGYTAAIIAFPMVNIT), 153 to 170 (VCEVIVGILCGGMMMMIL), 381 to 403 (QWDAGANALTLAAISCVLYSAVA), 410 to 432 (SLLMRTLVLLSLFSFVVKFGLMV), 437 to 454 (LWQFLLFLFPLLATMQLL), 461 to 483 (FAALWGQLIVFMGSFIAVTNPPV), and 493 to 510 (NLAKIVGVALAWLAFAIL).

This sequence belongs to the aromatic acid exporter ArAE (TC 2.A.85) family.

It is found in the cell membrane. This is an uncharacterized protein from Escherichia coli (strain K12).